The chain runs to 248 residues: Probable transcriptional regulatory protein PLES_43501 (248 aa).

Belongs to the TACO1 family.

The protein resides in the cytoplasm. In Pseudomonas aeruginosa (strain LESB58), this protein is Probable transcriptional regulatory protein PLES_43501.